Consider the following 794-residue polypeptide: MPSHCSSLLCARFRLSSLAVIVALAASGVRAEGAGSSPSAAEIDWRPRSELPPEVAGRLPVFCEGGYLPGTVGGDGAVVPGEGIEGSMPLEASALNARYELDSELYLQGDVRLRQGPFQATGAEARYNQQSGELQLQGPLVSRGEGFLLTGQDANYSTQSGQLDINTATFLLHESELRGEASSLSRVSESQVVISDGMITTCGPGQNDWSIVASDIELDQAEGFGTARHVRLEVLDAPVFYWPYITFPIDDRRKTGFLYPQFGSSSAGSGAYLALPYYLNLAPHYDATLTPQYIHGRGLFTEVEGRYLSQYGESVLQLGYIDNDSAFRDENPGENGERWALDFTTRAAFGGGWSGYGDYSVISDEDYLSDLNRSLEIDQATHLQRRGGVRYYGANQYFETYLNGYQTIPDRIADVDKPYAQLPEVIYGGSLEAGWLEASLESQYTWFYRDNENLTGLDKANGQRLRAIPELALPMRALWGFSRPSVSLDYTRYELDDYTLGDAGFDRTVPVFEWDNGLYFDRRSSLFDVPYNQTLEPRLYYAWADAESDQNYIPDFDTGIRSFRFDQLFRRDRFTGGDRVGDANQLTVALTSRFNDLLTGAERARVSVGQVRYFEDREVDLFGEGASDRSRSPLAGELVLNPIDNLELRSSLLWDHETRKTEEGRSQLIFHSEDYRYLATLGHTYSRPDELEQTDIGTVFPVTDQVSAIGRWVWDSELDRTVGTLAGLEYNNCCWSFQVVHQNYLTDDEELDTRLLFRIELKGLGGSGGASDNIADAIYGYDERERRRFGNPRR.

The N-terminal stretch at 1-31 (MPSHCSSLLCARFRLSSLAVIVALAASGVRA) is a signal peptide.

This sequence belongs to the LptD family. Component of the lipopolysaccharide transport and assembly complex. Interacts with LptE and LptA.

The protein localises to the cell outer membrane. Its function is as follows. Together with LptE, is involved in the assembly of lipopolysaccharide (LPS) at the surface of the outer membrane. This chain is LPS-assembly protein LptD, found in Marinobacter nauticus (strain ATCC 700491 / DSM 11845 / VT8) (Marinobacter aquaeolei).